A 567-amino-acid chain; its full sequence is uncharacterized protein (567 aa).

A run of 12 helical transmembrane segments spans residues 136–156, 159–179, 193–213, 217–237, 258–278, 291–311, 334–354, 364–384, 393–415, 426–446, 457–477, and 536–553; these read LFCLGCLWCYFSSGMVSLIFA, FMGIGGGGLITLSTIINSDII, LLLGFGAICGASFGGVLSEVF, LCFLVQVPFSVLSIAVGFFFV, ILGGLLLVSGLTSLLLVLTFG, LLLLLGILCIVAFVYVESITE, FLIGLAGYAYLFTLPLFFQLV, LRLALPSLSTPIGGLICGILM, LLFSGVFLMSLGYFLSLFIHPGI, PANVGQGIGFPSSLFSFIFAF, TLYLIRSIGSLFGVGGLSAVI, and AQQFTTICCVLALGLCIL.

This sequence belongs to the major facilitator superfamily.

It localises to the membrane. This is an uncharacterized protein from Schizosaccharomyces pombe (strain 972 / ATCC 24843) (Fission yeast).